A 44-amino-acid chain; its full sequence is Cytochrome b559 subunit beta (44 aa).

The chain crosses the membrane as a helical span at residues 19–35 (WVSIHALAVPTIFFLGS). Residue His-23 coordinates heme.

It belongs to the PsbE/PsbF family. Heterodimer of an alpha subunit and a beta subunit. PSII is composed of 1 copy each of membrane proteins PsbA, PsbB, PsbC, PsbD, PsbE, PsbF, PsbH, PsbI, PsbJ, PsbK, PsbL, PsbM, PsbT, PsbX, PsbY, PsbZ, Psb30/Ycf12, at least 3 peripheral proteins of the oxygen-evolving complex and a large number of cofactors. It forms dimeric complexes. Requires heme b as cofactor.

It is found in the plastid. The protein resides in the chloroplast thylakoid membrane. This b-type cytochrome is tightly associated with the reaction center of photosystem II (PSII). PSII is a light-driven water:plastoquinone oxidoreductase that uses light energy to abstract electrons from H(2)O, generating O(2) and a proton gradient subsequently used for ATP formation. It consists of a core antenna complex that captures photons, and an electron transfer chain that converts photonic excitation into a charge separation. This chain is Cytochrome b559 subunit beta, found in Chlamydomonas moewusii (Chlamydomonas eugametos).